Reading from the N-terminus, the 331-residue chain is Olfactory receptor 7D11 (331 aa).

The Extracellular portion of the chain corresponds to 1-25; that stretch reads MEIENHTLITKFLILGLSDDPELQP. An N-linked (GlcNAc...) asparagine glycan is attached at Asn5. A helical membrane pass occupies residues 26–46; that stretch reads ILFGLFLSMYLVTLLGNLLII. Residues 47 to 57 lie on the Cytoplasmic side of the membrane; it reads LAVSSDSHLHK. The chain crosses the membrane as a helical span at residues 58–78; the sequence is PMYFLLSNLSFIDICFISTTI. Over 79–97 the chain is Extracellular; sequence PKMLVNMQSQIKDISYIEC. Residues Cys97 and Cys179 are joined by a disulfide bond. A helical membrane pass occupies residues 98–118; sequence LTQVFFFNIFAGMDNFLLTLM. The Cytoplasmic portion of the chain corresponds to 119 to 142; it reads AYDRFVAICHPLNYTVIMNPRLCA. The chain crosses the membrane as a helical span at residues 143–163; that stretch reads LLILMFWIIMFWVSLIHVLLM. The Extracellular portion of the chain corresponds to 164–196; that stretch reads NELNFSRGTEIPHFFCELAQVLKVSNSDNHVNN. Asn167 carries an N-linked (GlcNAc...) asparagine glycan. Residues 197-217 form a helical membrane-spanning segment; the sequence is VFMYVVTSLLGVIPMTGILMS. At 218–244 the chain is on the cytoplasmic side; the sequence is YSQIFSSLFRMSSTVSKYKAFSTCGSH. Residues 245–265 traverse the membrane as a helical segment; it reads LCVVTLFYGSGFGVYFSSSVV. Residues 266 to 271 lie on the Extracellular side of the membrane; that stretch reads HSTQRR. Residues 272-292 form a helical membrane-spanning segment; it reads KVASLMYTVISPMLNPFIYTL. At 293–331 the chain is on the cytoplasmic side; the sequence is RNKDVKGALGKLFNRVASSPSCINDIRNKLLLRSVRQIL.

This sequence belongs to the G-protein coupled receptor 1 family.

The protein resides in the cell membrane. Functionally, possible olfactory or taste receptor. In Mus musculus (Mouse), this protein is Olfactory receptor 7D11.